Consider the following 769-residue polypeptide: Neutral alpha-glucosidase C (769 aa).

The active-site Nucleophile is the D366. Residue E369 is part of the active site. D442 (proton donor) is an active-site residue.

It belongs to the glycosyl hydrolase 31 family.

The enzyme catalyses Hydrolysis of terminal, non-reducing (1-&gt;4)-linked alpha-D-glucose residues with release of alpha-D-glucose.. Has alpha-glucosidase activity. The protein is Neutral alpha-glucosidase C (GANC) of Macaca fascicularis (Crab-eating macaque).